Here is a 173-residue protein sequence, read N- to C-terminus: Translation initiation factor IF-3 (173 aa).

This sequence belongs to the IF-3 family. In terms of assembly, monomer.

The protein localises to the cytoplasm. Functionally, IF-3 binds to the 30S ribosomal subunit and shifts the equilibrium between 70S ribosomes and their 50S and 30S subunits in favor of the free subunits, thus enhancing the availability of 30S subunits on which protein synthesis initiation begins. The sequence is that of Translation initiation factor IF-3 from Methylobacterium sp. (strain 4-46).